A 128-amino-acid polypeptide reads, in one-letter code: Large ribosomal subunit protein bL17 (128 aa).

The protein belongs to the bacterial ribosomal protein bL17 family. In terms of assembly, part of the 50S ribosomal subunit. Contacts protein L32.

This Glaesserella parasuis serovar 5 (strain SH0165) (Haemophilus parasuis) protein is Large ribosomal subunit protein bL17.